We begin with the raw amino-acid sequence, 231 residues long: Phosphatidylserine decarboxylase proenzyme (231 aa).

The active-site Schiff-base intermediate with substrate; via pyruvic acid is Ser-188. Ser-188 carries the post-translational modification Pyruvic acid (Ser); by autocatalysis.

The protein belongs to the phosphatidylserine decarboxylase family. PSD-A subfamily. Heterodimer of a large membrane-associated beta subunit and a small pyruvoyl-containing alpha subunit. Requires pyruvate as cofactor. Is synthesized initially as an inactive proenzyme. Formation of the active enzyme involves a self-maturation process in which the active site pyruvoyl group is generated from an internal serine residue via an autocatalytic post-translational modification. Two non-identical subunits are generated from the proenzyme in this reaction, and the pyruvate is formed at the N-terminus of the alpha chain, which is derived from the carboxyl end of the proenzyme. The post-translation cleavage follows an unusual pathway, termed non-hydrolytic serinolysis, in which the side chain hydroxyl group of the serine supplies its oxygen atom to form the C-terminus of the beta chain, while the remainder of the serine residue undergoes an oxidative deamination to produce ammonia and the pyruvoyl prosthetic group on the alpha chain.

The protein localises to the cell membrane. It carries out the reaction a 1,2-diacyl-sn-glycero-3-phospho-L-serine + H(+) = a 1,2-diacyl-sn-glycero-3-phosphoethanolamine + CO2. It functions in the pathway phospholipid metabolism; phosphatidylethanolamine biosynthesis; phosphatidylethanolamine from CDP-diacylglycerol: step 2/2. Functionally, catalyzes the formation of phosphatidylethanolamine (PtdEtn) from phosphatidylserine (PtdSer). This chain is Phosphatidylserine decarboxylase proenzyme, found in Rickettsia africae (strain ESF-5).